The chain runs to 437 residues: Citrate synthase (437 aa).

Catalysis depends on residues histidine 316 and aspartate 372.

This sequence belongs to the citrate synthase family. Homohexamer.

It carries out the reaction oxaloacetate + acetyl-CoA + H2O = citrate + CoA + H(+). Its pathway is carbohydrate metabolism; tricarboxylic acid cycle; isocitrate from oxaloacetate: step 1/2. Weakly inhibited by ATP (apparent Ki = 10 mm). This chain is Citrate synthase (gltA), found in Corynebacterium glutamicum (strain ATCC 13032 / DSM 20300 / JCM 1318 / BCRC 11384 / CCUG 27702 / LMG 3730 / NBRC 12168 / NCIMB 10025 / NRRL B-2784 / 534).